Reading from the N-terminus, the 373-residue chain is Histidine protein methyltransferase 1 homolog (373 aa).

Over residues 30 to 42 the composition is skewed to basic and acidic residues; it reads SKESLVSERQKGT. Disordered regions lie at residues 30–52 and 64–94; these read SKES…STEQ and KSER…HEEK. The span at 70 to 88 shows a compositional bias: polar residues; sequence APSQDPDSSFGAANSSSNL. A phosphoserine mark is found at S72 and S77. At H154 the chain carries Tele-methylhistidine. S-adenosyl-L-methionine-binding positions include 168–172, G195, and 216–218; these read IWECT and QDY. The Nuclear localization signal motif lies at 247-253; sequence PDVKRLR. S-adenosyl-L-methionine-binding positions include 269 to 271 and S294; that span reads GEW.

Belongs to the methyltransferase superfamily. METTL18 family. As to quaternary structure, interacts with GRWD1 and members of the heat shock protein 90 and 70 families; these proteins may possibly be methylation substrates for the enzyme. In terms of processing, monomethylated at His-154 through automethylation. Automethylation at His-154 positively regulates the methyltransferase activity toward RPL3. Probably methylated on other residues.

The protein resides in the cytoplasm. It is found in the cytosol. Its subcellular location is the nucleus. It localises to the nucleolus. The catalysed reaction is L-histidyl-[protein] + S-adenosyl-L-methionine = N(tele)-methyl-L-histidyl-[protein] + S-adenosyl-L-homocysteine + H(+). Its function is as follows. Protein-L-histidine N-tele-methyltransferase that specifically monomethylates RPL3, thereby regulating translation elongation. Histidine methylation of RPL3 regulates translation elongation by slowing ribosome traversal on tyrosine codons: slower elongation provides enough time for proper folding of synthesized proteins and prevents cellular aggregation of tyrosine-rich proteins. This is Histidine protein methyltransferase 1 homolog (METTL18) from Bos taurus (Bovine).